Here is a 276-residue protein sequence, read N- to C-terminus: Large ribosomal subunit protein uL2 (276 aa).

Disordered stretches follow at residues 26-45 (RSTP…GRNC) and 224-276 (AMNP…RGQK). A compositionally biased stretch (basic residues) spans 259–276 (RDKKKASSKLIIKRRGQK).

Belongs to the universal ribosomal protein uL2 family. In terms of assembly, part of the 50S ribosomal subunit. Forms a bridge to the 30S subunit in the 70S ribosome.

One of the primary rRNA binding proteins. Required for association of the 30S and 50S subunits to form the 70S ribosome, for tRNA binding and peptide bond formation. It has been suggested to have peptidyltransferase activity; this is somewhat controversial. Makes several contacts with the 16S rRNA in the 70S ribosome. This chain is Large ribosomal subunit protein uL2, found in Oleidesulfovibrio alaskensis (strain ATCC BAA-1058 / DSM 17464 / G20) (Desulfovibrio alaskensis).